Consider the following 944-residue polypeptide: Probable UDP-N-acetylglucosamine--peptide N-acetylglucosaminyltransferase SPINDLY (944 aa).

TPR repeat units lie at residues 34–67, 68–101, 102–135, 143–176, 177–210, 211–244, 252–285, 286–319, 320–353, 355–387, and 388–421; these read GTDALRYANILRSRNKFADALQLYTTVLDKDGAN, VEALIGKGICLQAQSLPRQALDCFTEAVKVDPKN, ACALTHCGMIYKDEGHLVEAAEAYQKARSADPSY, AIVLTDLGTSLKLAGNTEDGIQKYCEALEVDSHY, APAYYNLGVVYSEMMQFDVALTCYEKAALERPLY, AEAYCNMGVIYKNRGELDAAIACYDRCLTISPNF, AIALTDLGTKVKIEGDINQGVAYYKKALFYNWHY, ADAMYNLGVAYGEMLNFEMAIVFYELALHFNPRC, AEACNNLGVIYKDRDNLDKAVECYQMALSIKPNF, QSLNNLGVVYTVQGKMDAAASMIEKAILANPTY, and AEAYNNLGVLYRDAGSITLSVQAYERCLQIDPDS. The tract at residues 422–944 is catalytic region; that stretch reads RNAGQNRLLA…RCEANGHSSR (523 aa). The disordered stretch occupies residues 873-944; that stretch reads NATAEEDNQS…RCEANGHSSR (72 aa). Residues 897-911 are compositionally biased toward polar residues; that stretch reads PQPQIMVNGVTSPEG.

This sequence belongs to the glycosyltransferase 41 family. O-GlcNAc transferase subfamily. As to expression, expressed in all parts of plants, including immature leaf blade, leaf sheath, mature leaf blade, roots, germinating embryos and aleurone layers.

Its subcellular location is the nucleus. It carries out the reaction L-seryl-[protein] + UDP-N-acetyl-alpha-D-glucosamine = 3-O-(N-acetyl-beta-D-glucosaminyl)-L-seryl-[protein] + UDP + H(+). The enzyme catalyses L-threonyl-[protein] + UDP-N-acetyl-alpha-D-glucosamine = 3-O-(N-acetyl-beta-D-glucosaminyl)-L-threonyl-[protein] + UDP + H(+). Its pathway is protein modification; protein glycosylation. Probable O-linked N-acetylglucosamine transferase (OGT) involved in various processes such as gibberellin (GA) signaling pathway. OGTs catalyze the addition of nucleotide-activated sugars directly onto the polypeptide through O-glycosidic linkage with the hydroxyl of serine or threonine. Probably acts by adding O-linked sugars to yet unknown proteins. The polypeptide is Probable UDP-N-acetylglucosamine--peptide N-acetylglucosaminyltransferase SPINDLY (SPY) (Hordeum vulgare (Barley)).